We begin with the raw amino-acid sequence, 252 residues long: 1-(5-phosphoribosyl)-5-[(5-phosphoribosylamino)methylideneamino] imidazole-4-carboxamide isomerase (252 aa).

Asp-8 serves as the catalytic Proton acceptor. The active-site Proton donor is Asp-129.

This sequence belongs to the HisA/HisF family.

It is found in the cytoplasm. The enzyme catalyses 1-(5-phospho-beta-D-ribosyl)-5-[(5-phospho-beta-D-ribosylamino)methylideneamino]imidazole-4-carboxamide = 5-[(5-phospho-1-deoxy-D-ribulos-1-ylimino)methylamino]-1-(5-phospho-beta-D-ribosyl)imidazole-4-carboxamide. It participates in amino-acid biosynthesis; L-histidine biosynthesis; L-histidine from 5-phospho-alpha-D-ribose 1-diphosphate: step 4/9. The protein is 1-(5-phosphoribosyl)-5-[(5-phosphoribosylamino)methylideneamino] imidazole-4-carboxamide isomerase of Synechococcus sp. (strain RCC307).